The primary structure comprises 327 residues: WRKY transcription factor WRKY76 (327 aa).

Residues 56–76 adopt a coiled-coil conformation; it reads AKIVEAKVTQMSEENRRLTEV. Residues 87–135 form a disordered region; sequence RLGLDGSASPPRPVSPLSGKKRSRESMETANSCDANSNRHQGGDADHAE. Residues 106–112 carry the Nuclear localization signal motif; the sequence is KKRSRES. The segment covering 114-126 has biased composition (polar residues); that stretch reads ETANSCDANSNRH. A DNA-binding region (WRKY) is located at residues 160–226; the sequence is DTSLVVKDGY…YEGEHNHPHP (67 aa).

The protein belongs to the WRKY group II-a family.

It is found in the nucleus. Transcription repressor. Interacts specifically with the W box (5'-(T)TGAC[CT]-3'), a frequently occurring elicitor-responsive cis-acting element. Regulates, probably indirectly, the activation of defense-related genes during defense response. Modulates plant innate immunity against X.oryzae pv. oryzae (Xoo). The protein is WRKY transcription factor WRKY76 of Oryza sativa subsp. japonica (Rice).